A 181-amino-acid polypeptide reads, in one-letter code: Peptide deformylase (181 aa).

The Fe cation site is built by cysteine 104 and histidine 146. The active site involves glutamate 147. Histidine 150 contacts Fe cation.

It belongs to the polypeptide deformylase family. Fe(2+) is required as a cofactor.

It catalyses the reaction N-terminal N-formyl-L-methionyl-[peptide] + H2O = N-terminal L-methionyl-[peptide] + formate. Functionally, removes the formyl group from the N-terminal Met of newly synthesized proteins. Requires at least a dipeptide for an efficient rate of reaction. N-terminal L-methionine is a prerequisite for activity but the enzyme has broad specificity at other positions. This Helicobacter hepaticus (strain ATCC 51449 / 3B1) protein is Peptide deformylase.